The following is a 198-amino-acid chain: Probable GTP-binding protein EngB (198 aa).

One can recognise an EngB-type G domain in the interval 22-195; it reads NIPEVALAGR…LEVIGRWVGL (174 aa). Residues 30-37, 57-61, 75-78, 142-145, and 174-176 contribute to the GTP site; these read GRSNVGKS, GRTRL, DLPG, TKAD, and FSA. Serine 37 and threonine 59 together coordinate Mg(2+).

It belongs to the TRAFAC class TrmE-Era-EngA-EngB-Septin-like GTPase superfamily. EngB GTPase family. It depends on Mg(2+) as a cofactor.

Its function is as follows. Necessary for normal cell division and for the maintenance of normal septation. This is Probable GTP-binding protein EngB from Pelotomaculum thermopropionicum (strain DSM 13744 / JCM 10971 / SI).